Here is a 202-residue protein sequence, read N- to C-terminus: tRNA (pseudouridine(54)-N(1))-methyltransferase (202 aa).

3 residues coordinate S-adenosyl-L-methionine: Leu-130, Gly-152, and Cys-185.

It belongs to the methyltransferase superfamily. TrmY family. Homodimer.

Its subcellular location is the cytoplasm. It catalyses the reaction pseudouridine(54) in tRNA + S-adenosyl-L-methionine = N(1)-methylpseudouridine(54) in tRNA + S-adenosyl-L-homocysteine + H(+). Functionally, specifically catalyzes the N1-methylation of pseudouridine at position 54 (Psi54) in tRNAs. This chain is tRNA (pseudouridine(54)-N(1))-methyltransferase, found in Methanococcoides burtonii (strain DSM 6242 / NBRC 107633 / OCM 468 / ACE-M).